We begin with the raw amino-acid sequence, 736 residues long: Prolyl 3-hydroxylase 1 (736 aa).

Residues 1–22 (MAVRALKLLTTLLAVVAAASQA) form the signal peptide. 4 TPR repeats span residues 35-68 (PDLL…RAAL), 143-176 (RSPY…NPEH), 205-238 (HMQE…YFVA), and 301-334 (PSHY…FPND). Asn-316 carries an N-linked (GlcNAc...) asparagine glycan. Positions 401–439 (KRLQEKQKSERETAVRISQEIGNLMKEIETLVEEKTKES) form a coiled coil. N-linked (GlcNAc...) asparagine glycans are attached at residues Asn-467 and Asn-540. The Fe2OG dioxygenase domain maps to 564–678 (SHLVCRTAIE…RCAIALWFTL (115 aa)). 3 residues coordinate Fe cation: His-587, Asp-589, and His-659. Arg-669 is a catalytic residue. Residues 699–736 (SPEEMDLSQEQPLDAQQGPPEPAQESLSGSESKPKDEL) are disordered. The Prevents secretion from ER signature appears at 733–736 (KDEL).

It belongs to the leprecan family. Fe cation serves as cofactor. The cofactor is L-ascorbate. Post-translationally, O-glycosylated; chondroitin sulfate.

Its subcellular location is the endoplasmic reticulum. The protein localises to the secreted. It is found in the extracellular space. The protein resides in the extracellular matrix. The enzyme catalyses L-prolyl-[collagen] + 2-oxoglutarate + O2 = trans-3-hydroxy-L-prolyl-[collagen] + succinate + CO2. Functionally, basement membrane-associated chondroitin sulfate proteoglycan (CSPG). Has prolyl 3-hydroxylase activity catalyzing the post-translational formation of 3-hydroxyproline in -Xaa-Pro-Gly- sequences in collagens, especially types IV and V. May be involved in the secretory pathway of cells. Has growth suppressive activity in fibroblasts. In Homo sapiens (Human), this protein is Prolyl 3-hydroxylase 1.